The following is a 391-amino-acid chain: MKIISVNAGSSSLKFKLFDMPKEELIFSGLIEKIGDQKSIFSLSYGNTKKETIMPVLNHQQAVKLLLDSLQINKIIDNLEEIKGVGHRIVQGGELFKDSVVLTEENILKIESLNDLAPLHNYANVLGIKAFEKNIPNIFQVGVFDTTFHQTIKQENFSYAIPYEWYQKYKIRKYGFHGISYKYVSNRTSEILANKDSKIIVCHAGNGVSLCAIEGNNSVDTSMGFTPLEGVPMGTRSGNIDPTIIEFISYKENKSIKEIMNILNKKSGFLGVSGVSNDARDIEISLQNGNKRSLLAHDVQIKRICDYIGSYYFLLKGIDALVFTAGMGENSSLFRKKIIQRLSFLGVFLDDEFNNSKGERIISTSNSFFKVLVIPTNEEIEIVREVCKIKN.

Residue asparagine 7 participates in Mg(2+) binding. Residue lysine 14 coordinates ATP. Substrate is bound at residue arginine 88. The active-site Proton donor/acceptor is the aspartate 145. ATP-binding positions include 203–207 (HAGNG), 278–280 (DAR), and 326–330 (GMGEN). Residue glutamate 378 participates in Mg(2+) binding.

Belongs to the acetokinase family. Homodimer. The cofactor is Mg(2+). Mn(2+) serves as cofactor.

The protein localises to the cytoplasm. It catalyses the reaction acetate + ATP = acetyl phosphate + ADP. It participates in metabolic intermediate biosynthesis; acetyl-CoA biosynthesis; acetyl-CoA from acetate: step 1/2. Catalyzes the formation of acetyl phosphate from acetate and ATP. Can also catalyze the reverse reaction. This is Acetate kinase from Phytoplasma mali (strain AT).